A 966-amino-acid polypeptide reads, in one-letter code: MASNSTKSFLADAGYGEQELDANSALMELDKGLRSGKLGEQCEAVVRFPRLFQKYPFPILINSAFLKLADVFRVGNNFLRLCVLKVTQQSEKHLEKILNVDEFVKRVFSVIHSNDPVARAITLRMLGSLASIIPERKNAHHSIRQSLDSHDNVEVEAAVFAAANFSAQSKDFAVGICNKISEMIQGLATPVDLKLKLIPILQHMHHDALLASSARQLLQQLVTSYPSTKMVIVSLHTFTLLAASSLVDTPKQIQLLLQYLKNDPRKAVKRLAVQDLKLLASKTPHTWSKENIQALCECALHTPYDSLKLGMLSVLSTLSGTIAIKHYFSVVPGNVGSSPRSSDLVKLAQECCYHSNRGIAAHGVRVLTNITVSCQEKDLLSLEQDAVFGLESLLVLCSQDDSPGAQSTVKSALSCMVKLAKGRPHLSRSVVDTLLTQLHSSQDAARILMCHCLAAIAMQLPVLGDGMLGDLVELYKVIGRSATDKQQELLVSLATVIFVASQKALSAEVKAVIKQQLESVSSGWTVYRIARQASRMGNHDMARELYQSLLTQVASEHFYFWLNSLKEFSHAEQCLTGLQEDSFSSALSCIAESLKFYHKGIASLTAASTPLNPLSFQCEFVKLRIDLLQAFSQLICTCNSLKTSPPPAIATTIAMTLGNDLQRCGRISNQMKQSMEEFRSLASRYRDLYQASFDADSATLRNVELQQQSCLLIAHAIEALVLDPESASFQEYGSTGAAHADSEYERRMMSVYSRVLEEVESLNRKYAPVSYMHTACLCNAIIALLKVPLSFQRYFFQKLQSTSIKLALSPSPRSPAEPIAVQNNQQLALKVEGVVQHGSKPGLFRRVQSVCLNVSSTLQSKSGQDYKIPIDSMTNEMEQRVEPHNDYFSTQFLLNFAVLGTHSITVESSVRDANGIVWKTGPRTTMFVKSLEDPYSQQIRLQQQAQQPLQPQPLPQPQPRSAYTRF.

A phosphoserine mark is found at Ser338 and Ser809. The segment at Leu941–Phe966 is disordered.

Belongs to the Integrator subunit 7 family. Component of the Integrator complex, composed of core subunits INTS1, INTS2, INTS3, INTS4, INTS5, INTS6, INTS7, INTS8, INTS9/RC74, INTS10, INTS11/CPSF3L, INTS12, INTS13, INTS14 and INTS15. The core complex associates with protein phosphatase 2A subunits PPP2CA and PPP2R1A, to form the Integrator-PP2A (INTAC) complex. Interacts with NABP2.

It is found in the nucleus. The protein localises to the chromosome. Its subcellular location is the cytoplasm. Functionally, component of the integrator complex, a multiprotein complex that terminates RNA polymerase II (Pol II) transcription in the promoter-proximal region of genes. The integrator complex provides a quality checkpoint during transcription elongation by driving premature transcription termination of transcripts that are unfavorably configured for transcriptional elongation: the complex terminates transcription by (1) catalyzing dephosphorylation of the C-terminal domain (CTD) of Pol II subunit POLR2A/RPB1 and SUPT5H/SPT5, (2) degrading the exiting nascent RNA transcript via endonuclease activity and (3) promoting the release of Pol II from bound DNA. The integrator complex is also involved in terminating the synthesis of non-coding Pol II transcripts, such as enhancer RNAs (eRNAs), small nuclear RNAs (snRNAs), telomerase RNAs and long non-coding RNAs (lncRNAs). May be not involved in the recruitment of cytoplasmic dynein to the nuclear envelope by different components of the INT complex. Plays a role in DNA damage response (DDR) signaling during the S phase. The sequence is that of Integrator complex subunit 7 (Ints7) from Mus musculus (Mouse).